A 93-amino-acid chain; its full sequence is Small integral membrane protein 36 (93 aa).

A helical membrane pass occupies residues 14–34 (LIILVASYVILLLVFLISCVL). The segment at 73-93 (PKGPGLSLGDPAPLGKKSTMV) is disordered.

The protein resides in the membrane. This Homo sapiens (Human) protein is Small integral membrane protein 36.